A 157-amino-acid polypeptide reads, in one-letter code: Probable succinate transporter subunit YjjB (157 aa).

5 helical membrane passes run 8–28 (LALM…AMVF), 34–54 (ALPW…LMMS), 55–75 (AGFN…SIGI), 87–107 (VFTV…TAMI), and 129–149 (FLKA…PGLW).

This sequence belongs to the ThrE exporter (TC 2.A.79) family. The transporter is composed of YjjB and YjjP.

It is found in the cell inner membrane. In terms of biological role, involved in succinate export with YjjP. Both proteins are required for export. This is Probable succinate transporter subunit YjjB from Salmonella typhi.